The chain runs to 1093 residues: Semaphorin 5c (1093 aa).

Positions Met1–Gly34 are cleaved as a signal peptide. N-linked (GlcNAc...) asparagine glycosylation is present at Asn48. Positions Ser50–Ala495 constitute a Sema domain. 2 disulfides stabilise this stretch: Cys118-Cys128 and Cys146-Cys155. N-linked (GlcNAc...) asparagine glycans are attached at residues Asn162, Asn182, Asn285, and Asn295. 2 disulfide bridges follow: Cys271–Cys376 and Cys296–Cys338. Residue Asn341 is glycosylated (N-linked (GlcNAc...) asparagine). The PSI domain occupies His497–Pro546. 3 consecutive TSP type-1 domains span residues Asp553–Thr605, His607–Pro663, and Asp671–Gln726. An N-linked (GlcNAc...) asparagine glycan is attached at Asn603. Cystine bridges form between Cys619–Cys656, Cys623–Cys662, Cys634–Cys646, Cys683–Cys720, Cys687–Cys725, and Cys698–Cys710. Asn745 is a glycosylation site (N-linked (GlcNAc...) asparagine). 3 consecutive TSP type-1 domains span residues Asp794–Pro834, His850–Glu901, and Leu904–Glu953. 3 cysteine pairs are disulfide-bonded: Cys862-Cys895, Cys866-Cys900, and Cys877-Cys885. Residues Thr960 to Ala980 form a helical membrane-spanning segment. 2 N-linked (GlcNAc...) asparagine glycosylation sites follow: Asn998 and Asn1046. The interval Pro1018–Gln1056 is disordered. The span at Asn1041–Asn1053 shows a compositional bias: low complexity.

Belongs to the semaphorin family. In egg chambers, high levels of expression in the follicle cells, with little to no expression in the germ cells (at protein level). In stage 3 to 7 egg chambers, planar polarized at the basal epithelial surface (at protein level).

Its subcellular location is the apical cell membrane. It is found in the lateral cell membrane. The protein resides in the endosome. Functionally, regulates the motility of migrating epithelial cells by providing guidance cues within the migratory environment and may also play a role in development of the olfactory system. May act as a positive axonal guidance cue. Function in neurons is essential for adult survival and is important for climbing behavior. Promotes collective migration of follicular epithelial cells in egg chambers, likely by acting at the leading edge of the basal epithelium cells to provide guidance cues across the cell boundary to the trailing edge of the cell ahead. The transmembrane receptor PlexA on the trailing edge of the cell ahead, appears to transduce this signal to suppress the formation of protrusions. Involved in olfactory avoidance behavior. This is Semaphorin 5c from Drosophila melanogaster (Fruit fly).